Reading from the N-terminus, the 245-residue chain is Acetylglutamate kinase (245 aa).

Substrate is bound by residues 41 to 42, arginine 63, and asparagine 156; that span reads GG.

The protein belongs to the acetylglutamate kinase family. ArgB subfamily.

It is found in the cytoplasm. The enzyme catalyses N-acetyl-L-glutamate + ATP = N-acetyl-L-glutamyl 5-phosphate + ADP. The protein operates within amino-acid biosynthesis; L-arginine biosynthesis; N(2)-acetyl-L-ornithine from L-glutamate: step 2/4. In terms of biological role, catalyzes the ATP-dependent phosphorylation of N-acetyl-L-glutamate. This chain is Acetylglutamate kinase, found in Streptococcus mutans serotype c (strain ATCC 700610 / UA159).